Reading from the N-terminus, the 134-residue chain is Insulin-like peptide 4 (134 aa).

The first 26 residues, 1–26, serve as a signal peptide directing secretion; the sequence is MSLIRLGLALLLLLATVSQLLQPVQG. Intrachain disulfides connect Cys31–Cys120, Cys43–Cys133, and Cys119–Cys124. The propeptide at 54–108 is connecting peptide; sequence SSASKDARVRDLIRKLQQPDEDIEQETETGRLKQKHTDADTEKGVPPAVGSGRKL. The tract at residues 72–107 is disordered; sequence PDEDIEQETETGRLKQKHTDADTEKGVPPAVGSGRK. The span at 81 to 96 shows a compositional bias: basic and acidic residues; it reads ETGRLKQKHTDADTEK.

Belongs to the insulin family. In terms of assembly, heterodimer of a B chain and an A chain linked by two disulfide bonds. Expressed at a high level in the embryonic mesoderm, with expression continuing after gastrulation and reducing from stage 12 onwards. Highly expressed in the embryonic anterior midgut rudiment and larval midgut.

The protein localises to the secreted. Functionally, possible ligand of InR/insulin-like receptor. This Drosophila melanogaster (Fruit fly) protein is Insulin-like peptide 4.